Consider the following 541-residue polypeptide: 5' exonuclease Apollo (541 aa).

K334 is covalently cross-linked (Glycyl lysine isopeptide (Lys-Gly) (interchain with G-Cter in SUMO2)). Disordered regions lie at residues 350–375 and 450–489; these read TQGV…KKHK and IGLG…TTHL. The span at 358–371 shows a compositional bias: basic and acidic residues; sequence PEEKADQVKVDRDS. The TBM motif lies at 492–507; that stretch reads ESGGLALKYLLTPVDF.

It belongs to the DNA repair metallo-beta-lactamase (DRMBL) family. In terms of assembly, interacts with TERF2; the interaction is direct. Interacts with MUS81, MRE11 and FANCD2. Interacts with HSPA2, HSPA8 and HSPA14. Interacts with SPAG5. Ubiquitinated, leading to its degradation. Interaction with TERF2 protects it from ubiquitination.

It is found in the chromosome. It localises to the telomere. The protein localises to the nucleus. The protein resides in the cytoplasm. Its subcellular location is the cytoskeleton. It is found in the microtubule organizing center. It localises to the centrosome. The catalysed reaction is a beta-lactam + H2O = a substituted beta-amino acid. 5'-3' exonuclease that plays a central role in telomere maintenance and protection during S-phase. Participates in the protection of telomeres against non-homologous end-joining (NHEJ)-mediated repair, thereby ensuring that telomeres do not fuse. Plays a key role in telomeric loop (T loop) formation by being recruited by TERF2 at the leading end telomeres and by processing leading-end telomeres immediately after their replication via its exonuclease activity: generates 3' single-stranded overhang at the leading end telomeres avoiding blunt leading-end telomeres that are vulnerable to end-joining reactions and expose the telomere end in a manner that activates the DNA repair pathways. Together with TERF2, required to protect telomeres from replicative damage during replication by controlling the amount of DNA topoisomerase (TOP1, TOP2A and TOP2B) needed for telomere replication during fork passage and prevent aberrant telomere topology. Also involved in response to DNA damage: plays a role in response to DNA interstrand cross-links (ICLs) by facilitating double-strand break formation. In case of spindle stress, involved in prophase checkpoint. Possesses beta-lactamase activity, catalyzing the hydrolysis of penicillin G and nitrocefin. Exhibits no activity towards other beta-lactam antibiotic classes including cephalosporins (cefotaxime) and carbapenems (imipenem). The sequence is that of 5' exonuclease Apollo (Dclre1b) from Rattus norvegicus (Rat).